We begin with the raw amino-acid sequence, 573 residues long: Urease subunit alpha (573 aa).

Ni(2+) is bound by residues His139, His141, and Lys222. Position 222 is an N6-carboxylysine (Lys222). Residue His224 participates in substrate binding. Ni(2+) is bound by residues His251 and His277. The Proton donor role is filled by His325. Asp365 contacts Ni(2+).

Belongs to the metallo-dependent hydrolases superfamily. Urease alpha subunit family. In terms of assembly, heterotrimer of UreA (gamma), UreB (beta) and UreC (alpha) subunits. Three heterotrimers associate to form the active enzyme. Ni cation is required as a cofactor. In terms of processing, carboxylation allows a single lysine to coordinate two nickel ions.

It is found in the cytoplasm. The enzyme catalyses urea + 2 H2O + H(+) = hydrogencarbonate + 2 NH4(+). It participates in nitrogen metabolism; urea degradation; CO(2) and NH(3) from urea (urease route): step 1/1. This is Urease subunit alpha from Flavobacterium johnsoniae (strain ATCC 17061 / DSM 2064 / JCM 8514 / BCRC 14874 / CCUG 350202 / NBRC 14942 / NCIMB 11054 / UW101) (Cytophaga johnsonae).